A 188-amino-acid polypeptide reads, in one-letter code: Inactive cysteine S-methyltransferase OspZ (188 aa).

This sequence belongs to the NleE/OspZ family.

Its subcellular location is the secreted. It is found in the host cytoplasm. The protein resides in the host nucleus. Its function is as follows. Inactive effector protein: in contrast to other members of the family, does not have the ability to inhibit host cell NF-kappa-B activation. Probably lacks cysteine S-methyltransferase activity due to its inability to bind S-adenosyl-L-methionine at the C-terminus. This Shigella flexneri protein is Inactive cysteine S-methyltransferase OspZ.